Here is a 132-residue protein sequence, read N- to C-terminus: Small ribosomal subunit protein uS8 (132 aa).

Belongs to the universal ribosomal protein uS8 family. Part of the 30S ribosomal subunit. Contacts proteins S5 and S12.

One of the primary rRNA binding proteins, it binds directly to 16S rRNA central domain where it helps coordinate assembly of the platform of the 30S subunit. The chain is Small ribosomal subunit protein uS8 from Brucella melitensis biotype 1 (strain ATCC 23456 / CCUG 17765 / NCTC 10094 / 16M).